A 379-amino-acid chain; its full sequence is Cytochrome b (379 aa).

The next 4 membrane-spanning stretches (helical) occupy residues 34 to 54, 78 to 99, 114 to 134, and 179 to 199; these read FGSLLGICLITQILTGLLLAM, WLIRNLHANGASFFFICIYFHI, WNTGIILLLTLMATAFVGYVL, and FFALHFLLPFLIAGITLIHLT. 2 residues coordinate heme b: His-84 and His-98. Heme b contacts are provided by His-183 and His-197. Residue His-202 coordinates a ubiquinone. 4 consecutive transmembrane segments (helical) span residues 227-247, 289-309, 321-341, and 348-368; these read LKDILGFTLMLIPLLTLTFFS, LGGVLALAASVLILFLTPLLH, FSQVLFWLLVANLLILTWVGS, and FIAIGQMASFTYFLILLVLFP.

Belongs to the cytochrome b family. As to quaternary structure, the cytochrome bc1 complex contains 11 subunits: 3 respiratory subunits (MT-CYB, CYC1 and UQCRFS1), 2 core proteins (UQCRC1 and UQCRC2) and 6 low-molecular weight proteins (UQCRH/QCR6, UQCRB/QCR7, UQCRQ/QCR8, UQCR10/QCR9, UQCR11/QCR10 and a cleavage product of UQCRFS1). This cytochrome bc1 complex then forms a dimer. Heme b is required as a cofactor.

The protein resides in the mitochondrion inner membrane. Functionally, component of the ubiquinol-cytochrome c reductase complex (complex III or cytochrome b-c1 complex) that is part of the mitochondrial respiratory chain. The b-c1 complex mediates electron transfer from ubiquinol to cytochrome c. Contributes to the generation of a proton gradient across the mitochondrial membrane that is then used for ATP synthesis. In Apteryx australis (Southern brown kiwi), this protein is Cytochrome b (MT-CYB).